The following is a 116-amino-acid chain: Spermadhesin Z13 (116 aa).

Cystine bridges form between Cys14-Cys35 and Cys58-Cys79. The CUB domain maps to 14–115 (CGDLYGEEYG…PDFFLIFRRV (102 aa)).

The protein belongs to the spermadhesin family. As to quaternary structure, homodimer; disulfide-linked. Seminal plasma.

It is found in the secreted. Functionally, may be involved in the fertilization process. This chain is Spermadhesin Z13, found in Bos taurus (Bovine).